A 283-amino-acid polypeptide reads, in one-letter code: 2-hydroxymuconate semialdehyde hydrolase (283 aa).

In terms of domain architecture, AB hydrolase-1 spans 32 to 262; sequence LMMIHGSGPG…QCGHWTQIEH (231 aa). Residues S107, D228, and H256 contribute to the active site.

It belongs to the DmpD/TodF/XylF esterase family.

It carries out the reaction (2Z,4E)-2-hydroxy-6-oxohexa-2,4-dienoate + H2O = 2-oxopent-4-enoate + formate + H(+). Its pathway is aromatic compound metabolism; benzoate degradation via hydroxylation. Functionally, catalyzes the conversion of 2-hydroxymuconate semialdehyde to 2-hydroxypent-2,4-dienoate. This Pseudomonas sp. (strain CF600) protein is 2-hydroxymuconate semialdehyde hydrolase (dmpD).